The following is a 314-amino-acid chain: MPIKLDNKLPALDVLRSENVFIMDENRASSQDIRPMEVLILNLMPTKEVTETQLLRLLANTPLQINVEFLYMASHKSKNTHAEHMETFYKTFDEIKDKYYDGLIVTGAPVEQMPFEEVDYWQELTRVFDWSKKHVYSTLHLCWGAQAGLYYKHGVDKVPLSEKLSGIYKQTVDMPENFLMNGFDDSFVSPHSRYTEVTLEDIKNKTDLDVVASGQEVGLSILASKDLREVYSFGHFEYDRDTLAREYRRDLEVGINPDVPANYFPGDDPSQEPKLRWNLAASTFFSNWINYAVYQETPYRLEELEDDFSFYGYL.

Cysteine 142 (acyl-thioester intermediate) is an active-site residue. Residues lysine 163 and serine 192 each contribute to the substrate site. The active-site Proton acceptor is histidine 235. Residue glutamate 237 is part of the active site. Position 249 (arginine 249) interacts with substrate.

Belongs to the MetA family.

The protein resides in the cytoplasm. The catalysed reaction is L-homoserine + acetyl-CoA = O-acetyl-L-homoserine + CoA. It participates in amino-acid biosynthesis; L-methionine biosynthesis via de novo pathway; O-acetyl-L-homoserine from L-homoserine: step 1/1. In terms of biological role, transfers an acetyl group from acetyl-CoA to L-homoserine, forming acetyl-L-homoserine. The chain is Homoserine O-acetyltransferase from Streptococcus thermophilus (strain ATCC BAA-491 / LMD-9).